The sequence spans 425 residues: Serine--tRNA ligase (425 aa).

231–233 (TAE) serves as a coordination point for L-serine. An ATP-binding site is contributed by 262-264 (RSE). E285 contributes to the L-serine binding site. Residue 349 to 352 (EISS) participates in ATP binding. S385 provides a ligand contact to L-serine.

This sequence belongs to the class-II aminoacyl-tRNA synthetase family. Type-1 seryl-tRNA synthetase subfamily. As to quaternary structure, homodimer. The tRNA molecule binds across the dimer.

The protein localises to the cytoplasm. It catalyses the reaction tRNA(Ser) + L-serine + ATP = L-seryl-tRNA(Ser) + AMP + diphosphate + H(+). The enzyme catalyses tRNA(Sec) + L-serine + ATP = L-seryl-tRNA(Sec) + AMP + diphosphate + H(+). Its pathway is aminoacyl-tRNA biosynthesis; selenocysteinyl-tRNA(Sec) biosynthesis; L-seryl-tRNA(Sec) from L-serine and tRNA(Sec): step 1/1. Functionally, catalyzes the attachment of serine to tRNA(Ser). Is also able to aminoacylate tRNA(Sec) with serine, to form the misacylated tRNA L-seryl-tRNA(Sec), which will be further converted into selenocysteinyl-tRNA(Sec). The polypeptide is Serine--tRNA ligase (Bartonella bacilliformis (strain ATCC 35685 / KC583 / Herrer 020/F12,63)).